The primary structure comprises 386 residues: Alkanesulfonate monooxygenase (386 aa).

Belongs to the SsuD family.

The catalysed reaction is an alkanesulfonate + FMNH2 + O2 = an aldehyde + FMN + sulfite + H2O + 2 H(+). Functionally, catalyzes the desulfonation of aliphatic sulfonates. In Delftia acidovorans (strain DSM 14801 / SPH-1), this protein is Alkanesulfonate monooxygenase.